We begin with the raw amino-acid sequence, 20 residues long: Cytochrome P450 3A5 (20 aa).

This sequence belongs to the cytochrome P450 family. Requires heme as cofactor.

Its subcellular location is the endoplasmic reticulum membrane. The protein localises to the microsome membrane. The enzyme catalyses an organic molecule + reduced [NADPH--hemoprotein reductase] + O2 = an alcohol + oxidized [NADPH--hemoprotein reductase] + H2O + H(+). In terms of biological role, 6-beta-testosterone hydroxylase. The polypeptide is Cytochrome P450 3A5 (Papio sp. (Baboon)).